Consider the following 282-residue polypeptide: Probable xyloglucan endotransglucosylase/hydrolase protein 18 (282 aa).

A signal peptide spans 1–26; sequence MKLSCGTSFAFLIMFLFAAQSMHVYA. The GH16 domain occupies 27-218; sequence GSFHKDVQIH…WSKAPFTAFY (192 aa). The Nucleophile role is filled by Glu-104. Glu-108 (proton donor) is an active-site residue. Glu-108 serves as a coordination point for xyloglucan. Residue Asn-112 is glycosylated (N-linked (GlcNAc...) asparagine). Residues 121 to 123, 131 to 133, 197 to 198, and Gly-202 each bind xyloglucan; these read HTN, DKE, and HW. An intrachain disulfide couples Cys-226 to Cys-235. A glycan (N-linked (GlcNAc...) asparagine) is linked at Asn-238. A disulfide bridge links Cys-267 with Cys-281. Residue Arg-272 participates in xyloglucan binding.

This sequence belongs to the glycosyl hydrolase 16 family. XTH group 2 subfamily. In terms of processing, contains at least one intrachain disulfide bond essential for its enzymatic activity. Root specific.

The protein resides in the secreted. It is found in the cell wall. Its subcellular location is the extracellular space. It localises to the apoplast. It carries out the reaction breaks a beta-(1-&gt;4) bond in the backbone of a xyloglucan and transfers the xyloglucanyl segment on to O-4 of the non-reducing terminal glucose residue of an acceptor, which can be a xyloglucan or an oligosaccharide of xyloglucan.. Its function is as follows. Catalyzes xyloglucan endohydrolysis (XEH) and/or endotransglycosylation (XET). Cleaves and religates xyloglucan polymers, an essential constituent of the primary cell wall, and thereby participates in cell wall construction of growing tissues. In Arabidopsis thaliana (Mouse-ear cress), this protein is Probable xyloglucan endotransglucosylase/hydrolase protein 18 (XTH18).